Consider the following 143-residue polypeptide: Large ribosomal subunit protein uL16c (143 aa).

This sequence belongs to the universal ribosomal protein uL16 family. As to quaternary structure, part of the 50S ribosomal subunit.

The protein resides in the plastid. It localises to the chloroplast. In Cyanidioschyzon merolae (strain NIES-3377 / 10D) (Unicellular red alga), this protein is Large ribosomal subunit protein uL16c.